An 827-amino-acid chain; its full sequence is Disintegrin and metalloproteinase domain-containing protein 17 (827 aa).

The first 17 residues, 1 to 17, serve as a signal peptide directing secretion; it reads MRQRLLFLTTLVPFVLA. Positions 18-214 are excised as a propeptide; sequence PRPPEEPGSG…SEEFVRRVKR (197 aa). The N-linked (GlcNAc...) asparagine glycan is linked to asparagine 157. The short motif at 182 to 189 is the Cysteine switch element; the sequence is KVCGYLNA. Cysteine 184 is a Zn(2+) binding site. The Extracellular portion of the chain corresponds to 215–671; it reads RAEPNPLKNT…NTFGKFLADN (457 aa). The region spanning 223–474 is the Peptidase M12B domain; that stretch reads NTCKLLVVAD…KAQECFQERS (252 aa). Disulfide bonds link cysteine 225/cysteine 333, cysteine 365/cysteine 469, and cysteine 423/cysteine 453. Asparagine 264 carries an N-linked (GlcNAc...) asparagine glycan. Histidine 405 provides a ligand contact to Zn(2+). Residue glutamate 406 is part of the active site. Histidine 409 and histidine 415 together coordinate Zn(2+). 4 N-linked (GlcNAc...) asparagine glycosylation sites follow: asparagine 452, asparagine 498, asparagine 539, and asparagine 551. The Disintegrin domain occupies 475-563; that stretch reads NKVCGNSRVD…ECPPPGDAED (89 aa). 4 cysteine pairs are disulfide-bonded: cysteine 534/cysteine 555, cysteine 573/cysteine 582, cysteine 578/cysteine 591, and cysteine 593/cysteine 600. Residues 603-671 are crambin-like; it reads CCRNLSGPCV…NTFGKFLADN (69 aa). Asparagine 606 is a glycosylation site (N-linked (GlcNAc...) asparagine). Residues 672–692 form a helical membrane-spanning segment; sequence IVGSVLVFSLIFWIPFSILVH. The Cytoplasmic portion of the chain corresponds to 693 to 827; the sequence is CVDKKLDKQY…SRVDSKETEC (135 aa). The SH3-binding signature appears at 731–738; it reads PAPQTPGR. At threonine 735 the chain carries Phosphothreonine; by MAPK14. Threonine 764 is subject to Phosphothreonine. Positions 766–827 are disordered; that stretch reads QEDPSTDSHV…SRVDSKETEC (62 aa). Serine 770 carries the phosphoserine modification. 3 stretches are compositionally biased toward basic and acidic residues: residues 771-784, 794-810, and 818-827; these read TDSHVDDDGFEKDP, SFEDLTDHPVTRSEKAA, and SRVDSKETEC. Phosphoserine is present on residues serine 794 and serine 822.

In terms of assembly, interacts with MAD2L1, MAPK14 and MUC1. Interacts with iRhom1/RHBDF1 and iRhom2/RHBDF2. Interacts with FRMD8 via its interaction with iRhom1/RHBDF1 and iRhom2/RHBDF2. Interacts with TSPAN8. Zn(2+) is required as a cofactor. Post-translationally, the precursor is cleaved by a furin endopeptidase. Phosphorylated. Stimulation by growth factor or phorbol 12-myristate 13-acetate induces phosphorylation of Ser-822 but decreases phosphorylation of Ser-794. Phosphorylation at Thr-735 by MAPK14 is required for ADAM17-mediated ectodomain shedding.

The protein localises to the membrane. It carries out the reaction Narrow endopeptidase specificity. Cleaves Pro-Leu-Ala-Gln-Ala-|-Val-Arg-Ser-Ser-Ser in the membrane-bound, 26-kDa form of tumor necrosis factor alpha (TNFalpha). Similarly cleaves other membrane-anchored, cell-surface proteins to 'shed' the extracellular domains.. In terms of biological role, transmembrane metalloprotease which mediates the ectodomain shedding of a myriad of transmembrane proteins including adhesion proteins, growth factor precursors and cytokines important for inflammation and immunity. Cleaves the membrane-bound precursor of TNF-alpha to its mature soluble form. Responsible for the proteolytical release of soluble JAM3 from endothelial cells surface. Responsible for the proteolytic release of several other cell-surface proteins, including p75 TNF-receptor, interleukin 1 receptor type II, p55 TNF-receptor, transforming growth factor-alpha, L-selectin, growth hormone receptor, MUC1 and the amyloid precursor protein. Acts as an activator of Notch pathway by mediating cleavage of Notch, generating the membrane-associated intermediate fragment called Notch extracellular truncation (NEXT). Plays a role in the proteolytic processing of ACE2. Plays a role in hemostasis through shedding of GP1BA, the platelet glycoprotein Ib alpha chain. Mediates the proteolytic cleavage of LAG3, leading to release the secreted form of LAG3. Mediates the proteolytic cleavage of IL6R, leading to the release of secreted form of IL6R. Mediates the proteolytic cleavage and shedding of FCGR3A upon NK cell stimulation, a mechanism that allows for increased NK cell motility and detachment from opsonized target cells. Cleaves TREM2, resulting in shedding of the TREM2 ectodomain. The sequence is that of Disintegrin and metalloproteinase domain-containing protein 17 (Adam17) from Rattus norvegicus (Rat).